The chain runs to 224 residues: Lipoprotein-releasing system ATP-binding protein LolD (224 aa).

Residues 5-224 form the ABC transporter domain; sequence LRAENIKKVI…GKVVGEITRV (220 aa). 37 to 44 lines the ATP pocket; that stretch reads GASGSGKS.

It belongs to the ABC transporter superfamily. Lipoprotein translocase (TC 3.A.1.125) family. As to quaternary structure, the complex is composed of two ATP-binding proteins (LolD) and two transmembrane proteins (LolC and LolE).

Its subcellular location is the cell inner membrane. Part of the ABC transporter complex LolCDE involved in the translocation of mature outer membrane-directed lipoproteins, from the inner membrane to the periplasmic chaperone, LolA. Responsible for the formation of the LolA-lipoprotein complex in an ATP-dependent manner. This chain is Lipoprotein-releasing system ATP-binding protein LolD, found in Aquifex aeolicus (strain VF5).